Reading from the N-terminus, the 501-residue chain is MEPQDPVKREGRLTPVIVLATLIAAFGSSFQYGYNVAAINSPSEFMKDFYNYTYYDRVGEYMNEFYLTLLWSVTVSMFPFGGFLGSLMVGPLVNNLGRKGTLLFNNIFSIVPALLMGFSELAKSFEMIIVARVLVGICAGLSSNVVPMYLGELAPKNWRGALGVVPQLFITIGILVAQIFGLRSLLANEEGWPILLGLTGIPAVLQLLFLPFFPESPRYLLIQKKDEAAAKSALRRLRGWHDVDAEIEEILEEDRAEKAVGFISVLKLFKMRSLRWQVISIIVLMAGQQLSGVNAIYYYADQIYLSAGVNEDDVQYVTAGTGAVNVLITVCAIFVVELMGRRFLLLLGFSVCFTACCVLTGALALQDVISWMPYVSIACVISYVIGHALGPSPIPALLVTEIFLQSSRPAAYMVAGTVHWLSNFTVGLVFPFIQVGLGAYSFVIFAVICLLTTVYIFLIIPETKSKTFIEINRIFIKMNKVPGVHPEKEELKEFPPSTARQ.

An N-acetylmethionine modification is found at Met-1. The Cytoplasmic segment spans residues 1 to 18 (MEPQDPVKREGRLTPVIV). The helical transmembrane segment at 19–39 (LATLIAAFGSSFQYGYNVAAI) threads the bilayer. Tyr-32 is a D-fructose binding site. The Extracellular segment spans residues 40 to 68 (NSPSEFMKDFYNYTYYDRVGEYMNEFYLT). N-linked (GlcNAc...) asparagine glycosylation occurs at Asn-51. Residues 69-91 (LLWSVTVSMFPFGGFLGSLMVGP) traverse the membrane as a helical segment. Residues 92 to 98 (LVNNLGR) are Cytoplasmic-facing. The helical transmembrane segment at 99–119 (KGTLLFNNIFSIVPALLMGFS) threads the bilayer. At 120–126 (ELAKSFE) the chain is on the extracellular side. A helical membrane pass occupies residues 127–149 (MIIVARVLVGICAGLSSNVVPMY). The Cytoplasmic portion of the chain corresponds to 150–161 (LGELAPKNWRGA). Residues 162–182 (LGVVPQLFITIGILVAQIFGL) traverse the membrane as a helical segment. Residue Gln-167 coordinates D-fructose. Topologically, residues 183–192 (RSLLANEEGW) are extracellular. A helical membrane pass occupies residues 193-213 (PILLGLTGIPAVLQLLFLPFF). Residues 214–277 (PESPRYLLIQ…LFKMRSLRWQ (64 aa)) are Cytoplasmic-facing. A helical membrane pass occupies residues 278–298 (VISIIVLMAGQQLSGVNAIYY). D-fructose-binding positions include Gln-288 and 296-298 (IYY). Residues 299–313 (YADQIYLSAGVNEDD) lie on the Extracellular side of the membrane. Residues 314 to 334 (VQYVTAGTGAVNVLITVCAIF) form a helical membrane-spanning segment. Over 335-342 (VVELMGRR) the chain is Cytoplasmic. The chain crosses the membrane as a helical span at residues 343–363 (FLLLLGFSVCFTACCVLTGAL). Residues 364-371 (ALQDVISW) are Extracellular-facing. Residues 372–394 (MPYVSIACVISYVIGHALGPSPI) form a helical membrane-spanning segment. His-387 is a binding site for D-fructose. Over 395 to 412 (PALLVTEIFLQSSRPAAY) the chain is Cytoplasmic. A helical transmembrane segment spans residues 413 to 433 (MVAGTVHWLSNFTVGLVFPFI). Position 419–420 (419–420 (HW)) interacts with D-fructose. Residues 434–439 (QVGLGA) lie on the Extracellular side of the membrane. Residues 440-460 (YSFVIFAVICLLTTVYIFLII) traverse the membrane as a helical segment. The Cytoplasmic portion of the chain corresponds to 461 to 501 (PETKSKTFIEINRIFIKMNKVPGVHPEKEELKEFPPSTARQ).

This sequence belongs to the major facilitator superfamily. Sugar transporter (TC 2.A.1.1) family. Glucose transporter subfamily.

It localises to the apical cell membrane. Its subcellular location is the cell membrane. The protein localises to the sarcolemma. It carries out the reaction D-fructose(out) = D-fructose(in). In terms of biological role, functions as a fructose transporter that has only low activity with other monosaccharides. Can mediate the uptake of deoxyglucose, but with low efficiency. Essential for fructose uptake in the small intestine. Plays a role in the regulation of salt uptake and blood pressure in response to dietary fructose. Required for the development of high blood pressure in response to high dietary fructose intake. This Bos taurus (Bovine) protein is Solute carrier family 2, facilitated glucose transporter member 5.